The sequence spans 68 residues: HSEGTFSNDYSKYQEERMAQDFVQWLMNSXXXXXXXXHADGTYTSNVSTYLQDQAAKDFVSWLKSGRA.

This sequence belongs to the glucagon family.

The protein resides in the secreted. In terms of biological role, promotes hydrolysis of glycogen and lipids, and raises the blood sugar level. This chain is Glucagon-1 (gcg), found in Oncorhynchus kisutch (Coho salmon).